The primary structure comprises 295 residues: MKPTYCGYAAIIGRPNVGKSTLLNQLLGQKISITSRKPQTTRYQILGVKTFKDIQVIYVDTPGLHASTERTINRYMNRTARGALRDVDAIVFVIEPHWESQDAWVLDNLKEIETPVFLVINKVDKIKNRAELLPLIEKVSSLYAFQKITPLSAKTGDQVGTLEQAVHQLMPESPFYFPPEQVTDRSDQFMASEIIREKLMRLLGQEIPYSLAVTLIEFRKEEKIIRISAVIWVEKKSQKGIVIGKGGERLKRVGTNARLDMEKWFGKRVFLQLWVKVKSGWADNERLLRELGFEE.

The region spanning 5–172 (YCGYAAIIGR…EQAVHQLMPE (168 aa)) is the Era-type G domain. Residues 13-20 (GRPNVGKS) are G1. 13 to 20 (GRPNVGKS) contacts GTP. The segment at 39–43 (QTTRY) is G2. The segment at 60 to 63 (DTPG) is G3. Residues 60 to 64 (DTPGL) and 121 to 124 (NKVD) contribute to the GTP site. The interval 121-124 (NKVD) is G4. The interval 151-153 (LSA) is G5. The KH type-2 domain maps to 203 to 279 (LGQEIPYSLA…FLQLWVKVKS (77 aa)).

Belongs to the TRAFAC class TrmE-Era-EngA-EngB-Septin-like GTPase superfamily. Era GTPase family. Monomer.

It is found in the cytoplasm. The protein resides in the cell inner membrane. In terms of biological role, an essential GTPase that binds both GDP and GTP, with rapid nucleotide exchange. Plays a role in 16S rRNA processing and 30S ribosomal subunit biogenesis and possibly also in cell cycle regulation and energy metabolism. This is GTPase Era from Coxiella burnetii (strain CbuG_Q212) (Coxiella burnetii (strain Q212)).